We begin with the raw amino-acid sequence, 384 residues long: Polar flagellin C (384 aa).

Residues 317 to 347 are a coiled coil; the sequence is AKQNRLSHSINNLANIQENVDASNSRIKDTD.

It belongs to the bacterial flagellin family. In terms of assembly, heteromer of multiple flagellin subunits including FlaA, FlaB/D, FlaC, FlaE and FlaF. Homomer of FlaC is not able to form a functional filament.

The protein localises to the secreted. Its subcellular location is the bacterial flagellum. Its function is as follows. Flagellin is the subunit protein which polymerizes to form the filaments of bacterial flagella. FlaC is not essential for polar flagellar synthesis and swimming motility. Homomer of FlaC is not able to form a functional filament. The chain is Polar flagellin C (flaC) from Vibrio parahaemolyticus serotype O3:K6 (strain RIMD 2210633).